Consider the following 577-residue polypeptide: Beta-fructofuranosidase, insoluble isoenzyme 1 (577 aa).

A signal peptide spans 1–22 (MGTRLLALAPWLLLLLLQLAGA). Aspartate 63 is an active-site residue. N-linked (GlcNAc...) asparagine glycans are attached at residues asparagine 158, asparagine 183, and asparagine 333.

Belongs to the glycosyl hydrolase 32 family.

It is found in the secreted. It localises to the extracellular space. Its subcellular location is the apoplast. The protein localises to the cell wall. It catalyses the reaction Hydrolysis of terminal non-reducing beta-D-fructofuranoside residues in beta-D-fructofuranosides.. In terms of biological role, may play a role in sucrose partitioning during seed development and in stress response. The chain is Beta-fructofuranosidase, insoluble isoenzyme 1 (CIN1) from Oryza sativa subsp. indica (Rice).